A 242-amino-acid polypeptide reads, in one-letter code: MQRRVPLSPDAAHCSSCMLGHVCVPVGMPANEVEKLDELVKERVRVERGKTLYELDDPLDAVYGVRFGSLKTQLEDSSGQLQITGFHLPGEIVGLDGMIESKHVSSAVALEDSEVCVIRLPEIDRVSTQLPSLQQQFRRLMSREITRSHQMLATVGAMRSEQRLAAFLLNLSQRYAALGYSSTEFVLRMSREEIGNYLGLTLETVSRLFSRFGREGLIRINQREVRLIDLPGLKQLIGQESC.

Positions 158–231 (MRSEQRLAAF…QREVRLIDLP (74 aa)) constitute an HTH crp-type domain. Residues 191-210 (REEIGNYLGLTLETVSRLFS) constitute a DNA-binding region (H-T-H motif).

May regulate gene expression in response to changes in oxygen levels or to changes in the redox potential of the bacterial environment. This is Transcriptional regulatory protein btr (btr) from Bordetella pertussis (strain Tohama I / ATCC BAA-589 / NCTC 13251).